A 284-amino-acid polypeptide reads, in one-letter code: Efem/EfeO family lipoprotein (284 aa).

The signal sequence occupies residues 1–17 (MKKLTTLLLASTLLIAA). The N-palmitoyl cysteine moiety is linked to residue Cys18. A lipid anchor (S-diacylglycerol cysteine) is attached at Cys18.

Belongs to the EfeM/EfeO family.

The protein localises to the cell membrane. The protein is Efem/EfeO family lipoprotein of Staphylococcus aureus (strain MRSA252).